The chain runs to 601 residues: MEGSDFLLAGVLFLFAAVAAVPLASRLGIGAVLGYLLAGIAIGPWGLGFISDVDEILHFSELGVVFLMFIIGLELNPSKLWQLRRSIFGVGAAQVLLSAALLAGLLMLTHFSWQAAVVGGIGLAMSSTAMALQLMREKGMNRSESGQLGFSVLLFQDLAVIPALALVPLLAGSADEHFDWMKIGMKVLAFVGMLIGGRYLLRPVFRFIAASGVREVFTAATLLLVLGSALFMDALGLSMALGTFIAGVLLAESEYRHELETAIDPFKGLLLGLFFISVGMSLNLGVLYTHLLWVVISVVVLVAVKIFVLYLLARLYGVRSSERMQFAGVLSQGGEFAFVLFSSASSQRLFQGDQMALLLVTVTLSMMTTPLLMKLVDKWLSRQFNGPEEEDEKPWVNDDKPQVIVVGFGRFGQVIGRLLMANKMRITVLERDISAVNLMRKYGYKVYYGDATQVDLLRSAGAEAAESIVITCNEPEDTMKLVEICQQHFPHLHILARARGRVEAHELLQAGVTQFSRETFSSALELGRKTLVTLGMHPHQAQRAQLHFRRLDMRMLRELIPMHTDTVQISRAREARRELEEIFQREMQQERRQLDGWDEFE.

The next 13 helical transmembrane spans lie at 4–24, 29–49, 55–75, 87–107, 115–135, 152–172, 177–197, 207–227, 230–250, 268–288, 291–311, 324–344, and 356–376; these read SDFL…VPLA, IGAV…GLGF, EILH…GLEL, IFGV…GLLM, AAVV…LQLM, VLLF…LLAG, HFDW…LIGG, FIAA…LVLG, LFMD…GVLL, GLLL…GVLY, LLWV…VLYL, MQFA…FSSA, and ALLL…MKLV. The RCK N-terminal domain occupies 400–519; the sequence is KPQVIVVGFG…AGVTQFSRET (120 aa).

It belongs to the monovalent cation:proton antiporter 2 (CPA2) transporter (TC 2.A.37) family. KefB subfamily. As to quaternary structure, interacts with the regulatory subunit KefG.

Its subcellular location is the cell inner membrane. Pore-forming subunit of a potassium efflux system that confers protection against electrophiles. Catalyzes K(+)/H(+) antiport. The protein is Glutathione-regulated potassium-efflux system protein KefB of Escherichia coli O127:H6 (strain E2348/69 / EPEC).